Reading from the N-terminus, the 648-residue chain is TBC1 domain family member 17 (648 aa).

Residues 218 to 309 form a required for interaction with OPTN region; the sequence is DPYSTTFSSF…PELKNRIFSG (92 aa). A disordered region spans residues 240 to 259; the sequence is PQPEGAASDLPPPPDDEPEP. The Rab-GAP TBC domain occupies 310 to 520; it reads GLSPSLRREA…RLWEVLWTGL (211 aa). Residues 594-648 form a disordered region; that stretch reads LAPPAEPHSPSPTASPLPLSPTRAPPTPPPSTDTAPQPDSSLEILPEEEDEGADS. Positions 597–624 are enriched in pro residues; it reads PAEPHSPSPTASPLPLSPTRAPPTPPPS. Phosphoserine occurs at positions 602 and 604. Phosphothreonine is present on threonine 606. Position 608 is a phosphoserine (serine 608). The residue at position 615 (threonine 615) is a Phosphothreonine. A compositionally biased stretch (low complexity) spans 625-634; sequence TDTAPQPDSS. Over residues 638–648 the composition is skewed to acidic residues; it reads LPEEEDEGADS.

As to quaternary structure, interacts with OPTN; this interaction mediates TBC1D17 transient association with Rab8.

It is found in the cytoplasmic vesicle. The protein localises to the autophagosome. Its subcellular location is the cytoplasm. The protein resides in the recycling endosome. Its function is as follows. Probable RAB GTPase-activating protein that inhibits RAB8A/B function. Reduces Rab8 recruitment to tubules emanating from the endocytic recycling compartment (ERC) and inhibits Rab8-mediated endocytic trafficking, such as that of transferrin receptor (TfR). Involved in regulation of autophagy. This is TBC1 domain family member 17 from Homo sapiens (Human).